Here is an 86-residue protein sequence, read N- to C-terminus: High affinity immunoglobulin epsilon receptor subunit gamma (86 aa).

Residues 1–18 (MIPAVILFLLLLVEEAAA) form the signal peptide. The Extracellular segment spans residues 19 to 23 (LGEPQ). The chain crosses the membrane as a helical span at residues 24–44 (LCYILDAILFLYGIVLTLLYC). The Cytoplasmic segment spans residues 45-86 (RLKIQVRKADIASREKSDAVYTGLNTRNQETYETLKHEKPPQ). Positions 54–82 (DIASREKSDAVYTGLNTRNQETYETLKHE) constitute an ITAM domain. A phosphotyrosine mark is found at tyrosine 65 and tyrosine 76. Threonine 78 is subject to Phosphothreonine.

The protein belongs to the CD3Z/FCER1G family. IgE Fc receptor is a tetramer of an alpha chain, a beta chain, and two disulfide linked gamma chains. Associates with FCGR1A to form a functional receptor complex. The signaling subunit of immunoglobulin gamma (IgG) Fc receptor complex. As a homodimer or a heterodimer of CD247 and FCER1G, associates with the ligand binding subunit FCGR3A to form a functional receptor complex. Associates with CLEC6A. Interacts with CLEC4E. Interacts (via ITAM domain) with SYK (via SH2 domains); activates SYK, enabling integrin-mediated activation of neutrophils and macrophages. Interacts with common beta chain of interleukin 3 receptor CSF2RB and recruits SYK in response to IL3 stimulation; this interaction is direct. Interacts with CD300LH; the interaction may be indirect. Interacts with CD300LD. Interacts with TARM1. Expressed in leukocytes and pinealocytes. Expression in the pineal gland does not undergo circadian variations.

It localises to the cell membrane. Adapter protein containing an immunoreceptor tyrosine-based activation motif (ITAM) that transduces activation signals from various immunoreceptors. As a component of the high-affinity immunoglobulin E (IgE) receptor, mediates allergic inflammatory signaling in mast cells. As a constitutive component of interleukin-3 receptor complex, selectively mediates interleukin 4/IL4 production by basophils priming T-cells toward effector T-helper 2 subset. Associates with pattern recognition receptors CLEC4D and CLEC4E to form a functional signaling complex in myeloid cells. Binding of mycobacterial trehalose 6,6'-dimycolate (TDM) to this receptor complex leads to phosphorylation of ITAM, triggering activation of SYK, CARD9 and NF-kappa-B, consequently driving maturation of antigen-presenting cells and shaping antigen-specific priming of T-cells toward effector T-helper 1 and T-helper 17 cell subtypes. May function cooperatively with other activating receptors. Functionally linked to integrin beta-2/ITGB2-mediated neutrophil activation. Also involved in integrin alpha-2/ITGA2-mediated platelet activation. In Rattus norvegicus (Rat), this protein is High affinity immunoglobulin epsilon receptor subunit gamma (Fcer1g).